Consider the following 492-residue polypeptide: MLRKLVCGLEIHTQLKTGQKLFSLSSTEASKPNTNISFFDIGLPGSQPTLNQACLLTALKACVSLNSNINSVSTFDRKHYFYPDQPNGYQITQYYRPISSGGFLKLSKRFDEIDEDEKLVRIHHIQIEQDTGKSLYKDLSDKSLVDYNRSNMPLIEVVTEPDLNSVKQVKAFLRKYLQLMKTMDVSTGQLEAGAMRVDVNVSVDDGERVEIKNMTSTSAIVNAIRYEFKRQTKSIDKGNPIKTKETRGWDGNKTFRLRDKESSVDYRYMPDPELPPVVLDVNDIVTRIKKMTITTPEEQLAQLMSPPYNIKLRDARILLNDRNLLGYYYALFSRTSAKNIPSKYPINWCCHEFLGYLAKNNIDFSEDLFPVHQLADLIDCIFREQVTNNNAKILFEHLLANPAENEGPIIDLITKYELGEVDVTNDSELLAQVDSIIDDVLDTYPAIVKELQEGNKPGSINYLLGQCMRTSAGRIKSKVFESRLKEKIHIIK.

The protein belongs to the GatB/GatE family. GatB subfamily. As to quaternary structure, subunit of the heterotrimeric GatFAB amidotransferase (AdT) complex, composed of A, B and F subunits.

It is found in the mitochondrion. The catalysed reaction is L-glutamyl-tRNA(Gln) + L-glutamine + ATP + H2O = L-glutaminyl-tRNA(Gln) + L-glutamate + ADP + phosphate + H(+). Functionally, allows the formation of correctly charged Gln-tRNA(Gln) through the transamidation of misacylated Glu-tRNA(Gln) in the mitochondria. The reaction takes place in the presence of glutamine and ATP through an activated gamma-phospho-Glu-tRNA(Gln). In Komagataella phaffii (strain GS115 / ATCC 20864) (Yeast), this protein is Glutamyl-tRNA(Gln) amidotransferase subunit B, mitochondrial.